A 345-amino-acid polypeptide reads, in one-letter code: Erythronate-4-phosphate dehydrogenase (345 aa).

Serine 45 serves as a coordination point for substrate. Residues aspartate 146 and threonine 174 each contribute to the NAD(+) site. Arginine 207 is a catalytic residue. Position 227 (aspartate 227) interacts with NAD(+). Residue glutamate 232 is part of the active site. The Proton donor role is filled by histidine 249. Residue glycine 252 participates in NAD(+) binding.

Belongs to the D-isomer specific 2-hydroxyacid dehydrogenase family. PdxB subfamily. Homodimer.

The protein localises to the cytoplasm. The catalysed reaction is 4-phospho-D-erythronate + NAD(+) = (R)-3-hydroxy-2-oxo-4-phosphooxybutanoate + NADH + H(+). The protein operates within cofactor biosynthesis; pyridoxine 5'-phosphate biosynthesis; pyridoxine 5'-phosphate from D-erythrose 4-phosphate: step 2/5. Its function is as follows. Catalyzes the oxidation of erythronate-4-phosphate to 3-hydroxy-2-oxo-4-phosphonooxybutanoate. This chain is Erythronate-4-phosphate dehydrogenase, found in Ruthia magnifica subsp. Calyptogena magnifica.